Here is a 391-residue protein sequence, read N- to C-terminus: Chorismate synthase (391 aa).

Position 48 (R48) interacts with NADP(+). Residues 126 to 128, G286, 301 to 305, and R328 contribute to the FMN site; these read RAS and KPTSS.

The protein belongs to the chorismate synthase family. FMNH2 is required as a cofactor.

The catalysed reaction is 5-O-(1-carboxyvinyl)-3-phosphoshikimate = chorismate + phosphate. Its pathway is metabolic intermediate biosynthesis; chorismate biosynthesis; chorismate from D-erythrose 4-phosphate and phosphoenolpyruvate: step 7/7. In terms of biological role, catalyzes the anti-1,4-elimination of the C-3 phosphate and the C-6 proR hydrogen from 5-enolpyruvylshikimate-3-phosphate (EPSP) to yield chorismate, which is the branch point compound that serves as the starting substrate for the three terminal pathways of aromatic amino acid biosynthesis. This reaction introduces a second double bond into the aromatic ring system. The sequence is that of Chorismate synthase from Saccharolobus islandicus (strain M.16.27) (Sulfolobus islandicus).